A 500-amino-acid polypeptide reads, in one-letter code: NAD(P)H-quinone oxidoreductase chain 4, chloroplastic (500 aa).

Helical transmembrane passes span 4–24 (FPWL…IFFL), 37–57 (ICIC…HFQL), 87–107 (IGPI…AWPI), 113–130 (LFHF…GSFS), 134–154 (LLLF…LLAM), 167–187 (FILY…GVAL), 208–228 (VLEI…LPII), 242–262 (HYST…YGLI), 272–292 (AHSI…IYAA), 305–325 (IAYS…SLTD), 330–350 (GALL…FLAG), 386–406 (LALP…GIIT), 411–431 (VLIP…LTPI), and 462–482 (LFLS…PDFV).

This sequence belongs to the complex I subunit 4 family.

The protein resides in the plastid. Its subcellular location is the chloroplast thylakoid membrane. The catalysed reaction is a plastoquinone + NADH + (n+1) H(+)(in) = a plastoquinol + NAD(+) + n H(+)(out). It carries out the reaction a plastoquinone + NADPH + (n+1) H(+)(in) = a plastoquinol + NADP(+) + n H(+)(out). The protein is NAD(P)H-quinone oxidoreductase chain 4, chloroplastic of Atropa belladonna (Belladonna).